We begin with the raw amino-acid sequence, 137 residues long: Large ribosomal subunit protein bL17 (137 aa).

The protein belongs to the bacterial ribosomal protein bL17 family. As to quaternary structure, part of the 50S ribosomal subunit. Contacts protein L32.

This is Large ribosomal subunit protein bL17 from Caulobacter vibrioides (strain ATCC 19089 / CIP 103742 / CB 15) (Caulobacter crescentus).